The following is an 86-amino-acid chain: Large ribosomal subunit protein bL27 (86 aa).

The interval 1 to 22 (MAHKKAGGSTRNGRDSESKRLG) is disordered.

The protein belongs to the bacterial ribosomal protein bL27 family.

The sequence is that of Large ribosomal subunit protein bL27 from Vibrio cholerae serotype O1 (strain ATCC 39315 / El Tor Inaba N16961).